Here is a 227-residue protein sequence, read N- to C-terminus: 7-cyano-7-deazaguanine synthase (227 aa).

Residue 8-18 coordinates ATP; that stretch reads FSGGQDSTTCL. The Zn(2+) site is built by Cys187, Cys196, Cys199, and Cys202.

It belongs to the QueC family. It depends on Zn(2+) as a cofactor.

The catalysed reaction is 7-carboxy-7-deazaguanine + NH4(+) + ATP = 7-cyano-7-deazaguanine + ADP + phosphate + H2O + H(+). Its pathway is purine metabolism; 7-cyano-7-deazaguanine biosynthesis. Catalyzes the ATP-dependent conversion of 7-carboxy-7-deazaguanine (CDG) to 7-cyano-7-deazaguanine (preQ(0)). This chain is 7-cyano-7-deazaguanine synthase, found in Shewanella pealeana (strain ATCC 700345 / ANG-SQ1).